The primary structure comprises 845 residues: Protein translocase subunit SecA 1 (845 aa).

ATP is bound by residues Gln-91, 109–113, and Asp-498; that span reads GEGKT. The interval 795-845 is disordered; the sequence is TDFGTAQHVSAEDGKEKAKKQPIVKGDKVGRNDPCPCGSGKKYKNCHGKEE. Zn(2+)-binding residues include Cys-829, Cys-831, Cys-840, and His-841. Basic residues predominate over residues 835–845; the sequence is KKYKNCHGKEE.

This sequence belongs to the SecA family. As to quaternary structure, monomer and homodimer. Part of the essential Sec protein translocation apparatus which comprises SecA, SecYEG and auxiliary proteins SecDF. Other proteins may also be involved. Requires Zn(2+) as cofactor.

The protein localises to the cell membrane. It localises to the cytoplasm. It catalyses the reaction ATP + H2O + cellular proteinSide 1 = ADP + phosphate + cellular proteinSide 2.. Functionally, part of the Sec protein translocase complex. Interacts with the SecYEG preprotein conducting channel. Has a central role in coupling the hydrolysis of ATP to the transfer of proteins into and across the cell membrane, serving as an ATP-driven molecular motor driving the stepwise translocation of polypeptide chains across the membrane. This Staphylococcus haemolyticus (strain JCSC1435) protein is Protein translocase subunit SecA 1.